The chain runs to 470 residues: Cysteine--tRNA ligase (470 aa).

Cys-28 is a Zn(2+) binding site. A 'HIGH' region motif is present at residues 30-40 (PTVYNYIHIGN). Zn(2+) is bound by residues Cys-211, His-236, and Glu-240. The short motif at 270 to 274 (KMSKS) is the 'KMSKS' region element. Lys-273 is a binding site for ATP.

The protein belongs to the class-I aminoacyl-tRNA synthetase family. In terms of assembly, monomer. The cofactor is Zn(2+).

The protein resides in the cytoplasm. It catalyses the reaction tRNA(Cys) + L-cysteine + ATP = L-cysteinyl-tRNA(Cys) + AMP + diphosphate. The polypeptide is Cysteine--tRNA ligase (Enterococcus faecalis (strain ATCC 700802 / V583)).